A 240-amino-acid chain; its full sequence is Large ribosomal subunit protein uL1 (240 aa).

It belongs to the universal ribosomal protein uL1 family. Part of the 50S ribosomal subunit.

In terms of biological role, binds directly to 23S rRNA. The L1 stalk is quite mobile in the ribosome, and is involved in E site tRNA release. Functionally, protein L1 is also a translational repressor protein, it controls the translation of the L11 operon by binding to its mRNA. The protein is Large ribosomal subunit protein uL1 of Streptomyces griseus subsp. griseus (strain JCM 4626 / CBS 651.72 / NBRC 13350 / KCC S-0626 / ISP 5235).